Reading from the N-terminus, the 205-residue chain is uncharacterized protein (205 aa).

Residues 1 to 63 (MQRTRELESS…QHPKVAKFLK (63 aa)) lie on the Cytoplasmic side of the membrane. The chain crosses the membrane as a helical span at residues 64–84 (VQLVFDLISLFIFATHQLLLL). Residues 85–124 (EDGNFGKHYFKRKTKRCSKFSCSRCNANAHHPKWFKFKHS) lie on the Extracellular side of the membrane. The chain crosses the membrane as a helical span at residues 125–145 (LLCLGTFCFGVYSLVKINKFF). At 146–205 (KTDQTVDLNRLLELFFWQLNAILNMKLFAFYGDHLESHSAPLDVYEDSFANKSSSGGDEV) the chain is on the cytoplasmic side.

The protein resides in the membrane. This is an uncharacterized protein from Saccharomyces cerevisiae (strain ATCC 204508 / S288c) (Baker's yeast).